Consider the following 627-residue polypeptide: Chaperone protein HtpG (627 aa).

The tract at residues 1 to 343 (MATQEFQAET…SEDLSLNISR (343 aa)) is a; substrate-binding. The segment at 344–553 (EMLQQDKQLK…EGEISIEMEK (210 aa)) is b. The segment at 554–627 (VLQSMPNNQN…YTNNVCKIMS (74 aa)) is c.

It belongs to the heat shock protein 90 family. In terms of assembly, homodimer.

The protein localises to the cytoplasm. Its function is as follows. Molecular chaperone. Has ATPase activity. The polypeptide is Chaperone protein HtpG (Natranaerobius thermophilus (strain ATCC BAA-1301 / DSM 18059 / JW/NM-WN-LF)).